Reading from the N-terminus, the 339-residue chain is Adenylosuccinate synthetase (339 aa).

Residues glycine 12 to serine 18 and glycine 42 to serine 44 each bind GTP. Aspartate 13 (proton acceptor) is an active-site residue. Residues aspartate 13 and glycine 42 each contribute to the Mg(2+) site. Residues aspartate 13–lysine 16, asparagine 40–histidine 43, threonine 127, arginine 141, glutamine 179, threonine 194, and arginine 256 contribute to the IMP site. Histidine 43 (proton donor) is an active-site residue. Threonine 252–arginine 258 is a substrate binding site. GTP-binding positions include arginine 258, methionine 284–aspartate 286, and lysine 324–glycine 326.

Belongs to the adenylosuccinate synthetase family. As to quaternary structure, homodimer. Mg(2+) serves as cofactor.

Its subcellular location is the cytoplasm. The enzyme catalyses IMP + L-aspartate + GTP = N(6)-(1,2-dicarboxyethyl)-AMP + GDP + phosphate + 2 H(+). It functions in the pathway purine metabolism; AMP biosynthesis via de novo pathway; AMP from IMP: step 1/2. Functionally, plays an important role in the de novo pathway of purine nucleotide biosynthesis. Catalyzes the first committed step in the biosynthesis of AMP from IMP. This Thermococcus onnurineus (strain NA1) protein is Adenylosuccinate synthetase.